Reading from the N-terminus, the 399-residue chain is Succinate--CoA ligase [ADP-forming] subunit beta (399 aa).

In terms of domain architecture, ATP-grasp spans 9 to 254 (KAVLKSFGAP…TTEEDEKEIE (246 aa)). ATP is bound by residues lysine 46, 53–55 (GRG), glutamate 109, alanine 112, and glutamate 117. The Mg(2+) site is built by asparagine 209 and aspartate 223. Substrate contacts are provided by residues asparagine 274 and 331 to 333 (GIM).

Belongs to the succinate/malate CoA ligase beta subunit family. Heterotetramer of two alpha and two beta subunits. Requires Mg(2+) as cofactor.

The catalysed reaction is succinate + ATP + CoA = succinyl-CoA + ADP + phosphate. The enzyme catalyses GTP + succinate + CoA = succinyl-CoA + GDP + phosphate. It functions in the pathway carbohydrate metabolism; tricarboxylic acid cycle; succinate from succinyl-CoA (ligase route): step 1/1. In terms of biological role, succinyl-CoA synthetase functions in the citric acid cycle (TCA), coupling the hydrolysis of succinyl-CoA to the synthesis of either ATP or GTP and thus represents the only step of substrate-level phosphorylation in the TCA. The beta subunit provides nucleotide specificity of the enzyme and binds the substrate succinate, while the binding sites for coenzyme A and phosphate are found in the alpha subunit. This chain is Succinate--CoA ligase [ADP-forming] subunit beta, found in Maricaulis maris (strain MCS10) (Caulobacter maris).